The primary structure comprises 95 residues: Cobalt transport protein CbiN (95 aa).

Helical transmembrane passes span 5–25 and 67–87; these read HILM…IYSG and LLFA…FGYY.

This sequence belongs to the CbiN family. As to quaternary structure, forms an energy-coupling factor (ECF) transporter complex composed of an ATP-binding protein (A component, CbiO), a transmembrane protein (T component, CbiQ) and 2 possible substrate-capture proteins (S components, CbiM and CbiN) of unknown stoichimetry.

Its subcellular location is the cell membrane. It functions in the pathway cofactor biosynthesis; adenosylcobalamin biosynthesis. Part of the energy-coupling factor (ECF) transporter complex CbiMNOQ involved in cobalt import. The chain is Cobalt transport protein CbiN from Methanothermobacter thermautotrophicus (strain ATCC 29096 / DSM 1053 / JCM 10044 / NBRC 100330 / Delta H) (Methanobacterium thermoautotrophicum).